We begin with the raw amino-acid sequence, 124 residues long: Heat-labile enterotoxin B chain (124 aa).

Residues methionine 1–glycine 21 form the signal peptide. The cysteines at positions 30 and 107 are disulfide-linked.

Heterohexamer of one A chain and of five B chains.

Functionally, the biological activity of the toxin is produced by the A chain, which activates intracellular adenyl cyclase. This chain is Heat-labile enterotoxin B chain (eltB), found in Escherichia coli.